A 128-amino-acid polypeptide reads, in one-letter code: Iron-sulfur cluster insertion protein ErpA (128 aa).

Residues C56, C120, and C122 each coordinate iron-sulfur cluster.

Belongs to the HesB/IscA family. Homodimer. It depends on iron-sulfur cluster as a cofactor.

In terms of biological role, required for insertion of 4Fe-4S clusters for at least IspG. The sequence is that of Iron-sulfur cluster insertion protein ErpA from Xanthomonas oryzae pv. oryzae (strain MAFF 311018).